Reading from the N-terminus, the 602-residue chain is Trichothecene efflux pump TRI12 (602 aa).

4 consecutive transmembrane segments (helical) span residues 49-69 (LTLL…SFII), 77-97 (NVSL…LLMG), 107-127 (GFIL…LYSF), and 134-154 (IGAQ…ILFI). N160 carries N-linked (GlcNAc...) asparagine glycosylation. 11 helical membrane-spanning segments follow: residues 164 to 184 (FLGN…GPYI), 196 to 216 (WIFY…FIFY), 240 to 260 (WIGA…VSWG), 271 to 291 (ILGL…YECY), 297 to 317 (PIIP…MLLI), 355 to 375 (STAG…FHIF), 380 to 400 (WQLI…ASVN), 408 to 428 (IAFS…TMLL), 450 to 470 (AICG…KFPG), 484 to 504 (WGFP…LTGQ), and 532 to 552 (AAAY…AIIA). The N-linked (GlcNAc...) asparagine glycan is linked to N590.

This sequence belongs to the major facilitator superfamily.

It localises to the cell membrane. Its function is as follows. Efflux pump that provides the dual role of trichothecene export and self-protection by allowing the fungus to evade the harmful effect of its own trichothecene production. This Trichoderma arundinaceum protein is Trichothecene efflux pump TRI12.